We begin with the raw amino-acid sequence, 230 residues long: 3-beta-hydroxysteroid-Delta(8),Delta(7)-isomerase (230 aa).

An N-acetylthreonine modification is found at Thr2. A run of 4 helical transmembrane segments spans residues 29 to 49, 66 to 86, 121 to 141, and 185 to 205; these read WHIL…TWLL, LCWF…FVLY, METI…IAFL, and FWFY…VLVL. The EXPERA domain occupies 61–204; it reads WRRLSLCWFA…LWLVLPGVLV (144 aa).

This sequence belongs to the EBP family.

It is found in the endoplasmic reticulum membrane. The protein resides in the nucleus envelope. Its subcellular location is the cytoplasmic vesicle. The catalysed reaction is lathosterol = 5alpha-cholest-8-en-3beta-ol. It catalyses the reaction zymosterol = 5alpha-cholesta-7,24-dien-3beta-ol. The enzyme catalyses 5,6alpha-epoxy-5alpha-cholestan-3beta-ol + H2O = 5alpha-cholestane-3beta,5,6beta-triol. It carries out the reaction 5,6beta-epoxy-5beta-cholestan-3beta-ol + H2O = 5alpha-cholestane-3beta,5,6beta-triol. The protein operates within steroid biosynthesis; cholesterol biosynthesis. Its activity is regulated as follows. Cholestenol Delta-isomerase and cholesterol-5,6-epoxide hydrolase (ChEH) activities are inhibited by tamoxifen and the selective AEBS ligand (4-benzyl-phenoxy)-ethyl-N-pyrrolidine (PBPE). ChEH activity is inhibited by oleic acid. Functionally, isomerase that catalyzes the conversion of Delta(8)-sterols to their corresponding Delta(7)-isomers a catalytic step in the postlanosterol biosynthesis of cholesterol. Component of the microsomal antiestrogen binding site (AEBS), a multiproteic complex at the ER membrane that consists of an association between EBP and 7-dehydrocholesterol reductase/DHCR7. This complex is responsible for cholesterol-5,6-epoxide hydrolase (ChEH) activity, which consists in the hydration of cholesterol-5,6-epoxides (5,6-EC) into cholestane-3beta,5alpha,6beta-triol (CT). The precise role of each component of this complex has not been described yet. The polypeptide is 3-beta-hydroxysteroid-Delta(8),Delta(7)-isomerase (Homo sapiens (Human)).